Here is a 312-residue protein sequence, read N- to C-terminus: Olfactory receptor 2T10 (312 aa).

Residues 1 to 25 are Extracellular-facing; that stretch reads MRLANQTLGGDFFLLGIFSQISHPG. The N-linked (GlcNAc...) asparagine glycan is linked to asparagine 5. The chain crosses the membrane as a helical span at residues 26 to 49; sequence RLCLLIFSIFLMAVSWNITLILLI. Over 50 to 57 the chain is Cytoplasmic; it reads HIDSSLHT. The helical transmembrane segment at 58–79 threads the bilayer; sequence PMYFFINQLSLIDLTYISVTVP. Over 80-100 the chain is Extracellular; the sequence is KMLVNQLAKDKTISVLGCGTQ. Cysteine 97 and cysteine 189 form a disulfide bridge. A helical membrane pass occupies residues 101–120; the sequence is MYFYLQLGGAECCLLAAMAY. Topologically, residues 121-139 are cytoplasmic; that stretch reads DRYVAICHPLRYSVLMSHR. Residues 140 to 158 form a helical membrane-spanning segment; it reads VCLLLASGCWFVGSVDGFM. Residues 159-195 are Extracellular-facing; the sequence is LTPIAMSFPFCRSHEIQHFFCEVPAVLKLSCSDTSLY. Residues 196–219 form a helical membrane-spanning segment; that stretch reads KIFMYLCCVIMLLIPVTVISVSYY. At 220 to 236 the chain is on the cytoplasmic side; sequence YIILTIHKMNSVEGRKK. A helical membrane pass occupies residues 237-259; that stretch reads AFTTCSSHITVVSLFYGAAIYNY. Residues 260–272 are Extracellular-facing; it reads MLPSSYQTPEKDM. Residues 273–292 form a helical membrane-spanning segment; that stretch reads MSSFFYTILTPVLNPIIYSF. The Cytoplasmic portion of the chain corresponds to 293-312; that stretch reads RNKDVTRALKKMLSVQKPPY.

It belongs to the G-protein coupled receptor 1 family.

The protein resides in the cell membrane. Its function is as follows. Odorant receptor. In Homo sapiens (Human), this protein is Olfactory receptor 2T10 (OR2T10).